Reading from the N-terminus, the 495-residue chain is Leucine aminopeptidase 2 (495 aa).

The N-terminal stretch at 1–21 (MKSQLLSLAVAVTTISQGVVG) is a signal peptide. A PA domain is found at 124–218 (PPASKIMAEL…EDGKNLATLV (95 aa)). Residues asparagine 142 and asparagine 235 are each glycosylated (N-linked (GlcNAc...) asparagine). The Zn(2+) site is built by histidine 259 and aspartate 271. An N-linked (GlcNAc...) asparagine glycan is attached at asparagine 272. Catalysis depends on glutamate 303, which acts as the Proton acceptor. Residues glutamate 304 and aspartate 332 each coordinate Zn(2+). An N-linked (GlcNAc...) asparagine glycan is attached at asparagine 352. Histidine 430 serves as a coordination point for Zn(2+).

The protein belongs to the peptidase M28 family. M28A subfamily. As to quaternary structure, monomer. It depends on Zn(2+) as a cofactor.

The protein resides in the secreted. Activity is inhibited by EDTA, o-phenanthroline, bestatin and amastatin. Its function is as follows. Extracellular aminopeptidase that releases a wide variety of amino acids from natural peptides and contributes to pathogenicity. This Trichophyton rubrum (Athlete's foot fungus) protein is Leucine aminopeptidase 2 (LAP2).